The following is a 118-amino-acid chain: Large ribosomal subunit protein bL20 (118 aa).

The protein belongs to the bacterial ribosomal protein bL20 family.

Binds directly to 23S ribosomal RNA and is necessary for the in vitro assembly process of the 50S ribosomal subunit. It is not involved in the protein synthesizing functions of that subunit. The sequence is that of Large ribosomal subunit protein bL20 from Desulfovibrio desulfuricans (strain ATCC 27774 / DSM 6949 / MB).